We begin with the raw amino-acid sequence, 142 residues long: Large ribosomal subunit protein uL11 (142 aa).

It belongs to the universal ribosomal protein uL11 family. As to quaternary structure, part of the ribosomal stalk of the 50S ribosomal subunit. Interacts with L10 and the large rRNA to form the base of the stalk. L10 forms an elongated spine to which L12 dimers bind in a sequential fashion forming a multimeric L10(L12)X complex. Post-translationally, one or more lysine residues are methylated.

Functionally, forms part of the ribosomal stalk which helps the ribosome interact with GTP-bound translation factors. This chain is Large ribosomal subunit protein uL11, found in Thermobifida fusca (strain YX).